We begin with the raw amino-acid sequence, 363 residues long: UDP-N-acetylglucosamine--N-acetylmuramyl-(pentapeptide) pyrophosphoryl-undecaprenol N-acetylglucosamine transferase (363 aa).

UDP-N-acetyl-alpha-D-glucosamine-binding positions include 12-14, Asn122, Arg164, Ser191, Ile245, and Gln290; that span reads TGG.

It belongs to the glycosyltransferase 28 family. MurG subfamily.

It localises to the cell membrane. The catalysed reaction is di-trans,octa-cis-undecaprenyl diphospho-N-acetyl-alpha-D-muramoyl-L-alanyl-D-glutamyl-meso-2,6-diaminopimeloyl-D-alanyl-D-alanine + UDP-N-acetyl-alpha-D-glucosamine = di-trans,octa-cis-undecaprenyl diphospho-[N-acetyl-alpha-D-glucosaminyl-(1-&gt;4)]-N-acetyl-alpha-D-muramoyl-L-alanyl-D-glutamyl-meso-2,6-diaminopimeloyl-D-alanyl-D-alanine + UDP + H(+). The protein operates within cell wall biogenesis; peptidoglycan biosynthesis. Cell wall formation. Catalyzes the transfer of a GlcNAc subunit on undecaprenyl-pyrophosphoryl-MurNAc-pentapeptide (lipid intermediate I) to form undecaprenyl-pyrophosphoryl-MurNAc-(pentapeptide)GlcNAc (lipid intermediate II). The chain is UDP-N-acetylglucosamine--N-acetylmuramyl-(pentapeptide) pyrophosphoryl-undecaprenol N-acetylglucosamine transferase from Lawsonia intracellularis (strain PHE/MN1-00).